A 96-amino-acid polypeptide reads, in one-letter code: Pro-glucagon (96 aa).

2 stretches are compositionally biased toward basic and acidic residues: residues 1 to 12 and 19 to 30; these read LQDAEDSSRFDA and EARELSTPKXHS. A disordered region spans residues 1-35; that stretch reads LQDAEDSSRFDADDTLAGEARELSTPKXHSEGTFS.

It belongs to the glucagon family.

Its subcellular location is the secreted. Functionally, plays a key role in glucose metabolism and homeostasis. Regulates blood glucose by increasing gluconeogenesis and decreasing glycolysis. This Myoxocephalus scorpius (Shorthorn sculpin) protein is Pro-glucagon (gcg).